We begin with the raw amino-acid sequence, 177 residues long: Large ribosomal subunit protein bL9 (177 aa).

Residues 151-177 form a disordered region; it reads VEEEPAEEVEAPAETEVAEDAEEATEA.

It belongs to the bacterial ribosomal protein bL9 family.

In terms of biological role, binds to the 23S rRNA. This Maridesulfovibrio salexigens (strain ATCC 14822 / DSM 2638 / NCIMB 8403 / VKM B-1763) (Desulfovibrio salexigens) protein is Large ribosomal subunit protein bL9.